We begin with the raw amino-acid sequence, 491 residues long: Acetyl-coenzyme A carboxylase carboxyl transferase subunit beta (491 aa).

Residues 132-491 (LWNQCENCFI…ISELLNLHAL (360 aa)) form the CoA carboxyltransferase N-terminal domain. Zn(2+) contacts are provided by Cys136, Cys139, Cys155, and Cys158. The C4-type zinc-finger motif lies at 136–158 (CENCFIPNYKKVLKSNMQICEEC). Residues 252-262 (EKVEEWTKPDL) show a composition bias toward basic and acidic residues. 2 disordered regions span residues 252 to 273 (EKVE…DEER) and 279 to 298 (DKGE…EDDD). Residues 284–298 (SQEIEDSEANDEDDD) are compositionally biased toward acidic residues.

The protein belongs to the AccD/PCCB family. Acetyl-CoA carboxylase is a heterohexamer composed of biotin carboxyl carrier protein, biotin carboxylase and 2 subunits each of ACCase subunit alpha and ACCase plastid-coded subunit beta (accD). Requires Zn(2+) as cofactor.

It localises to the plastid. It carries out the reaction N(6)-carboxybiotinyl-L-lysyl-[protein] + acetyl-CoA = N(6)-biotinyl-L-lysyl-[protein] + malonyl-CoA. Its pathway is lipid metabolism; malonyl-CoA biosynthesis; malonyl-CoA from acetyl-CoA: step 1/1. Component of the acetyl coenzyme A carboxylase (ACC) complex. Biotin carboxylase (BC) catalyzes the carboxylation of biotin on its carrier protein (BCCP) and then the CO(2) group is transferred by the transcarboxylase to acetyl-CoA to form malonyl-CoA. The sequence is that of Acetyl-coenzyme A carboxylase carboxyl transferase subunit beta from Cuscuta gronovii (Common dodder).